The primary structure comprises 1498 residues: Rap guanine nucleotide exchange factor 2 (1498 aa).

2 disordered regions span residues 40 to 59 and 68 to 101; these read HVSS…SSSL and SEAG…SDPL. Positions 83 to 94 are enriched in acidic residues; the sequence is VDSEDDDDEEDI. 135–252 lines the a nucleoside 3',5'-cyclic phosphate pocket; the sequence is AFANMTMSVR…QKVEEEGEIV (118 aa). Positions 267–380 constitute an N-terminal Ras-GEF domain; the sequence is KGHIVIKGTS…RLLNIACAAK (114 aa). Positions 385-468 constitute a PDZ domain; that stretch reads LMTLTKPSRE…LSITVKTNLF (84 aa). Serine 501 is modified (phosphoserine). The Ras-associating domain occupies 606 to 692; the sequence is PDQVLRVFKA…GRYYLKNNME (87 aa). Threonine 644 is subject to Phosphothreonine. The region spanning 717–944 is the Ras-GEF domain; the sequence is STVEVATQLS…SQGSTNATVL (228 aa). A phosphoserine mark is found at serine 806, serine 930, serine 933, serine 1022, serine 1079, serine 1088, serine 1094, serine 1115, serine 1119, serine 1158, and serine 1175. Residues 1002–1048 are disordered; sequence PATNTLPKNPGDKKPVKSETSPVAPRAGSQQKAQAQPPPPQPQPQHK. The disordered stretch occupies residues 1094-1159; sequence SLERHKKQAE…RSSIVSNSSF (66 aa). Low complexity-rich tracts occupy residues 1110–1124 and 1140–1159; these read SSQL…QSSP and SDSG…NSSF. 3 disordered regions span residues 1224 to 1257, 1304 to 1371, and 1392 to 1498; these read STEE…GSHD, TKYN…TKPV, and EGRY…VSAV. Polar residues-rich tracts occupy residues 1246–1257 and 1306–1330; these read GSWTSCSSGSHD and YNRQ…SSTG. Residues 1354–1365 are compositionally biased toward low complexity; that stretch reads EAESSSVTSVTT. Residues 1487 to 1498 are compositionally biased toward acidic residues; it reads TEEDEDEQVSAV.

It belongs to the RAPGEF2 family. In terms of assembly, found in a complex, at least composed of KIDINS220, MAGI2, NTRK1 and RAPGEF2; the complex is mainly formed at late endosomes in a neuronal growth factor (NGF)-dependent manner. Interacts (via C-terminal domain) with NEDD4 (via WW domains); this interaction leads to ubiquitination and degradation via the proteasome pathway in a cAMP-independent manner. Interacts with MAGI1 (via PDZ domain). Interacts with ADRB1 (via C-terminal PDZ motif); the interaction is direct. Interacts (via Ras-associating domain) with RAP1A (via GTP-bound active form). Interacts weakly with HRAS (via GDP- and GTP-bound forms). Interacts (via C-terminal domain) with MAGI2 (via PDZ and WW domains). Interacts with CDH1, CTNNB1 and TJP1. Ubiquitinated by NEDD4, leading to proteasomal degradation. Post-translationally, phosphorylation by PLK2 promotes its activity.

The protein resides in the cell junction. It localises to the cytoplasm. Its subcellular location is the perinuclear region. The protein localises to the cell membrane. It is found in the late endosome. Functionally, functions as a guanine nucleotide exchange factor (GEF), which activates Rap and Ras family of small GTPases by exchanging bound GDP for free GTP in a cAMP-dependent manner. Serves as a link between cell surface receptors and Rap/Ras GTPases in intracellular signaling cascades. Also acts as an effector for Rap1 by direct association with Rap1-GTP thereby leading to the amplification of Rap1-mediated signaling. Shows weak activity on HRAS. It is controversial whether RAPGEF2 binds cAMP and cGMP or not. Its binding to ligand-activated beta-1 adrenergic receptor ADRB1 leads to the Ras activation through the G(s)-alpha signaling pathway. Involved in the cAMP-induced Ras and Erk1/2 signaling pathway that leads to sustained inhibition of long term melanogenesis by reducing dendrite extension and melanin synthesis. Also provides inhibitory signals for cell proliferation of melanoma cells and promotes their apoptosis in a cAMP-independent nanner. Regulates cAMP-induced neuritogenesis by mediating the Rap1/B-Raf/ERK signaling through a pathway that is independent on both PKA and RAPGEF3/RAPGEF4. Involved in neuron migration and in the formation of the major forebrain fiber connections forming the corpus callosum, the anterior commissure and the hippocampal commissure during brain development. Involved in neuronal growth factor (NGF)-induced sustained activation of Rap1 at late endosomes and in brain-derived neurotrophic factor (BDNF)-induced axon outgrowth of hippocampal neurons. Plays a role in the regulation of embryonic blood vessel formation and in the establishment of basal junction integrity and endothelial barrier function. May be involved in the regulation of the vascular endothelial growth factor receptor KDR and cadherin CDH5 expression at allantois endothelial cell-cell junctions. The sequence is that of Rap guanine nucleotide exchange factor 2 (RAPGEF2) from Canis lupus familiaris (Dog).